Reading from the N-terminus, the 360-residue chain is TIMELESS-interacting protein (360 aa).

Disordered regions lie at residues 1–80, 178–199, 220–246, and 289–360; these read MMDP…QRLA, PSEDFSFPDELHVPSPSQPVKV, RMEKMQAQAESQALSQATQSDPNEIPD, and QDVS…KEEY. Acidic residues predominate over residues 34 to 48; the sequence is ADDEAEDVANGDDWT. Over residues 62–71 the composition is skewed to basic residues; the sequence is PARRVVKRPQ. An interaction with TIMELESS region spans residues 74 to 150; it reads LDGQRLASQR…KEVQTCLKKI (77 aa). The span at 225–239 shows a compositional bias: low complexity; sequence QAQAESQALSQATQS.

It belongs to the CSM3 family. Interacts with timeless, which impairs timeless self-association.

It localises to the cytoplasm. It is found in the nucleus. Plays an important role in the control of DNA replication and the maintenance of replication fork stability. Important for cell survival after DNA damage or replication stress. May be required for the replication checkpoint induced by hydroxyurea or ultraviolet light. In Xenopus laevis (African clawed frog), this protein is TIMELESS-interacting protein (tipin).